We begin with the raw amino-acid sequence, 527 residues long: Cytokinin dehydrogenase 6 (527 aa).

The first 22 residues, 1 to 22, serve as a signal peptide directing secretion; sequence MAARCSIAFMVMASCLSVVVSG. One can recognise an FAD-binding PCMH-type domain in the interval 55 to 236; it reads VAAAPEAVLH…TRARIGLEPA (182 aa). Residues G91 and G93 each contribute to the FAD site. At H94 the chain carries Pros-8alpha-FAD histidine. Positions 95 and 99 each coordinate FAD. Residue N121 is glycosylated (N-linked (GlcNAc...) asparagine). Residues D160, T165, S171, I175, and I226 each coordinate FAD. N280 and N323 each carry an N-linked (GlcNAc...) asparagine glycan. FAD-binding residues include Y475, S510, and Q513.

This sequence belongs to the oxygen-dependent FAD-linked oxidoreductase family. In terms of assembly, monomer. It depends on FAD as a cofactor.

The protein localises to the secreted. It is found in the extracellular space. The catalysed reaction is N(6)-dimethylallyladenine + A + H2O = 3-methyl-2-butenal + adenine + AH2. Functionally, catalyzes the oxidation of cytokinins, a family of N(6)-substituted adenine derivatives that are plant hormones, where the substituent is an isopentenyl group. This Oryza sativa subsp. japonica (Rice) protein is Cytokinin dehydrogenase 6 (CKX6).